A 333-amino-acid chain; its full sequence is L-asparagine oxygenase (333 aa).

The L-asparagine site is built by glutamate 125 and asparagine 146. Fe cation is bound by residues histidine 155 and glutamate 157. The L-asparagine site is built by glutamate 157 and asparagine 158. Histidine 287 contributes to the Fe cation binding site. Arginine 301 serves as a coordination point for 2-oxoglutarate. Arginine 305 serves as a coordination point for L-asparagine.

This sequence belongs to the clavaminate synthase family. It depends on Fe(2+) as a cofactor.

The catalysed reaction is L-asparagine + 2-oxoglutarate + O2 = (2S,3S)-3-hydroxyasparagine + succinate + CO2. Its pathway is antibiotic biosynthesis; calcium-dependent antibiotic biosynthesis. Its function is as follows. Catalyzes the 3-hydroxylation of L-asparagine to (2S,3S)-3-hydroxyasparagine. The 3-hydroxylated asparagine produced is incorporated at position 9 during the biosynthesis of the non-ribosomally synthesized calcium-dependent antibiotic (CDA), a 11-residue acidic lipopeptide lactone. Is able to hydroxylate only free L-asparagine, since it hydroxylates neither a CDA analog with unmodified Asn at position 9 nor a peptidyl-carrier-protein (PCP)-bound asparagine. Is not active toward D-asparagine. The chain is L-asparagine oxygenase (asnO) from Streptomyces coelicolor (strain ATCC BAA-471 / A3(2) / M145).